The following is a 1846-amino-acid chain: Brefeldin A-inhibited guanine nucleotide-exchange protein 1 (1846 aa).

The DCB; DCB:DCB domain and DCB:HUS domain interaction stretch occupies residues 2 to 224 (YEGKKTKNMF…QEAKQMERER (223 aa)). Residue Ser-52 is modified to Phosphoserine. Disordered stretches follow at residues 216–249 (EAKQ…LRYL), 264–304 (DLEP…ATAA), and 347–410 (ISAS…SPGA). Positions 264–277 (DLEPQTHDVDKSLQ) are enriched in basic and acidic residues. Residues Ser-286, Ser-289, and Ser-290 each carry the phosphoserine modification. 2 stretches are compositionally biased toward polar residues: residues 348–357 (SASTEGNTGT) and 391–406 (SVSS…SSGP). Residues Ser-394 and Ser-407 each carry the phosphoserine modification. The segment at 554–574 (ADAQSVVDIYVNYDCDLNAAN) is HUS; DCB:HUS domain interaction. The interval 631–684 (PNSQTTLGQEKPSEQEISEVKHPETINRYGSLNSLESTSSSGIGSYSTQMSGTD) is disordered. Positions 641–655 (KPSEQEISEVKHPET) are enriched in basic and acidic residues. Residues 661-681 (SLNSLESTSSSGIGSYSTQMS) show a composition bias toward low complexity. Positions 688 to 877 (QFEVLKQQKE…SAIYNEIAGK (190 aa)) constitute an SEC7 domain. The short motif at 708–712 (KKPKR) is the Nuclear localization signal (NLS) element. 3 positions are modified to phosphoserine: Ser-1076, Ser-1563, and Ser-1566.

Homodimer. Interacts with ARFGEF2/BIG2; both proteins are probably part of the same or very similar macromolecular complexes. Interacts with FKBP2. Interacts with MYO9B. Interacts with PRKAR1A and PRKAR2A. Interacts with PPP1CC. Interacts with NCL, FBL, NUP62 and U3 small nucleolar RNA. Interacts with DPY30. Interacts with PDE3A. Interacts with KANK1. Interacts with TBC1D22A and TBC1D22B. In terms of processing, phosphorylated. In vitro phosphorylated by PKA reducing its GEF activity and dephosphorylated by phosphatase PP1.

It is found in the cytoplasm. The protein localises to the perinuclear region. The protein resides in the golgi apparatus. It localises to the trans-Golgi network. Its subcellular location is the nucleus. It is found in the nucleolus. The protein localises to the nucleus matrix. The protein resides in the membrane. Its activity is regulated as follows. Inhibited by brefeldin A. In terms of biological role, promotes guanine-nucleotide exchange on ARF1 and ARF3. Promotes the activation of ARF1/ARF3 through replacement of GDP with GTP. Involved in vesicular trafficking. Required for the maintenance of Golgi structure; the function may be independent of its GEF activity. Required for the maturation of integrin beta-1 in the Golgi. Involved in the establishment and persistence of cell polarity during directed cell movement in wound healing. Proposed to act as A kinase-anchoring protein (AKAP) and may mediate crosstalk between Arf and PKA pathways. Inhibits GAP activity of MYO9B probably through competitive RhoA binding. The function in the nucleus remains to be determined. This is Brefeldin A-inhibited guanine nucleotide-exchange protein 1 (Arfgef1) from Mus musculus (Mouse).